Consider the following 335-residue polypeptide: Phosphatidylglycerol--prolipoprotein diacylglyceryl transferase (335 aa).

A run of 3 helical transmembrane segments spans residues 31-51, 67-87, and 100-120; these read IYWYGIIFVCGFLLAILTYSL, YIFLAIPMTIIGARLWSLAIG, and LAIQGGVIAGVLSAAIYFPLI. R163 contributes to the a 1,2-diacyl-sn-glycero-3-phospho-(1'-sn-glycerol) binding site. The next 3 membrane-spanning stretches (helical) occupy residues 213–233, 235–255, and 277–297; these read PLFLYESFFNVIVFVFIYFGL, YIKQLKIGFVSMSYFFFYGVI, and SLLLIFGVLGALYVQFIAPIL.

Belongs to the Lgt family.

Its subcellular location is the cell membrane. The enzyme catalyses L-cysteinyl-[prolipoprotein] + a 1,2-diacyl-sn-glycero-3-phospho-(1'-sn-glycerol) = an S-1,2-diacyl-sn-glyceryl-L-cysteinyl-[prolipoprotein] + sn-glycerol 1-phosphate + H(+). It participates in protein modification; lipoprotein biosynthesis (diacylglyceryl transfer). Functionally, catalyzes the transfer of the diacylglyceryl group from phosphatidylglycerol to the sulfhydryl group of the N-terminal cysteine of a prolipoprotein, the first step in the formation of mature lipoproteins. This chain is Phosphatidylglycerol--prolipoprotein diacylglyceryl transferase, found in Ureaplasma urealyticum serovar 10 (strain ATCC 33699 / Western).